We begin with the raw amino-acid sequence, 360 residues long: Phospho-N-acetylmuramoyl-pentapeptide-transferase (360 aa).

10 consecutive transmembrane segments (helical) span residues 24 to 44, 69 to 89, 92 to 112, 133 to 153, 158 to 178, 199 to 219, 239 to 259, 263 to 283, 288 to 308, and 337 to 357; these read RAVM…PWTI, GTPT…TLLW, WANP…ALGF, MVWQ…LAAN, ILIV…GFLV, GLAA…AYVS, VAIF…FNAY, VFMG…VAVI, FVLV…MLQV, and QVVV…LSTL.

The protein belongs to the glycosyltransferase 4 family. MraY subfamily. The cofactor is Mg(2+).

Its subcellular location is the cell inner membrane. The catalysed reaction is UDP-N-acetyl-alpha-D-muramoyl-L-alanyl-gamma-D-glutamyl-meso-2,6-diaminopimeloyl-D-alanyl-D-alanine + di-trans,octa-cis-undecaprenyl phosphate = di-trans,octa-cis-undecaprenyl diphospho-N-acetyl-alpha-D-muramoyl-L-alanyl-D-glutamyl-meso-2,6-diaminopimeloyl-D-alanyl-D-alanine + UMP. It functions in the pathway cell wall biogenesis; peptidoglycan biosynthesis. In terms of biological role, catalyzes the initial step of the lipid cycle reactions in the biosynthesis of the cell wall peptidoglycan: transfers peptidoglycan precursor phospho-MurNAc-pentapeptide from UDP-MurNAc-pentapeptide onto the lipid carrier undecaprenyl phosphate, yielding undecaprenyl-pyrophosphoryl-MurNAc-pentapeptide, known as lipid I. This is Phospho-N-acetylmuramoyl-pentapeptide-transferase from Neisseria gonorrhoeae (strain ATCC 700825 / FA 1090).